A 271-amino-acid chain; its full sequence is tRNA (guanine-N(7)-)-methyltransferase (271 aa).

The tract at residues 1–52 (MSDSHHTPEAASASLRHVRAKGEPRFPDGPKADPAGSHFERRIRSFQPRRSR) is disordered. A compositionally biased stretch (basic and acidic residues) spans 20–31 (AKGEPRFPDGPK). Residues E93, D118, D145, and D168 each contribute to the S-adenosyl-L-methionine site. D168 is a catalytic residue. Residues K172, D204, and 241 to 244 (TRFE) contribute to the substrate site.

Belongs to the class I-like SAM-binding methyltransferase superfamily. TrmB family.

It catalyses the reaction guanosine(46) in tRNA + S-adenosyl-L-methionine = N(7)-methylguanosine(46) in tRNA + S-adenosyl-L-homocysteine. It participates in tRNA modification; N(7)-methylguanine-tRNA biosynthesis. In terms of biological role, catalyzes the formation of N(7)-methylguanine at position 46 (m7G46) in tRNA. In Streptomyces coelicolor (strain ATCC BAA-471 / A3(2) / M145), this protein is tRNA (guanine-N(7)-)-methyltransferase.